Consider the following 104-residue polypeptide: uncharacterized protein (104 aa).

This is an uncharacterized protein from Treponema pallidum (strain Nichols).